We begin with the raw amino-acid sequence, 117 residues long: UPF0344 protein GTNG_0604 (117 aa).

The next 4 helical transmembrane spans lie at 1–21 (MTHA…IAVS), 39–59 (LFYI…ASIS), 61–81 (LYWL…MVLV), and 97–117 (VIAL…FDLF).

This sequence belongs to the UPF0344 family.

The protein localises to the cell membrane. This Geobacillus thermodenitrificans (strain NG80-2) protein is UPF0344 protein GTNG_0604.